The primary structure comprises 458 residues: Protein amnionless (458 aa).

The signal sequence occupies residues 1–19; sequence MGALGRALLWLQLCALARA. Over 20-366 the chain is Extracellular; sequence AYKLWVPTTD…LGSGSRAGLA (347 aa). N35 carries N-linked (GlcNAc...) asparagine glycosylation. Cystine bridges form between C43–C96, C137–C213, C205–C211, C223–C249, C234–C250, and C239–C253. The interval 67–87 is interaction with CUBN; sequence SDMLLPRDGEFVLASGAGFGA. Residues 203–254 form the VWFC domain; it reads GACADPSGCVCGDAEVQPWICAALLQPLGGRCPPAACPDALRPEGQCCDLCG. Residues 367–387 traverse the membrane as a helical segment; sequence GGVAAGLLLLLLALAAGLLLL. Residues 388–458 lie on the Cytoplasmic side of the membrane; the sequence is RRAPRLRWTK…VNPLFAEAEA (71 aa). Residues 422–446 are disordered; it reads SVGPVPRTPQPPPAQQAGSSSTSRS.

Interacts (via extracellular region) with CUBN/cubilin. This gives rise to a huge complex containing one AMN chain and three CUBN chains. N-glycosylated. Post-translationally, a soluble form arises by proteolytic removal of the membrane anchor. Detected in kidney (at protein level). Detected in kidney and ileum.

The protein resides in the apical cell membrane. It localises to the cell membrane. It is found in the endosome membrane. The protein localises to the membrane. Its subcellular location is the coated pit. The protein resides in the secreted. Functionally, membrane-bound component of the endocytic receptor formed by AMN and CUBN. Required for normal CUBN glycosylation and trafficking to the cell surface. The complex formed by AMN and CUBN is required for efficient absorption of vitamin B12. Required for normal CUBN-mediated protein transport in the kidney. This is Protein amnionless (AMN) from Canis lupus familiaris (Dog).